A 95-amino-acid chain; its full sequence is Co-chaperonin GroES (95 aa).

It belongs to the GroES chaperonin family. Heptamer of 7 subunits arranged in a ring. Interacts with the chaperonin GroEL.

Its subcellular location is the cytoplasm. In terms of biological role, together with the chaperonin GroEL, plays an essential role in assisting protein folding. The GroEL-GroES system forms a nano-cage that allows encapsulation of the non-native substrate proteins and provides a physical environment optimized to promote and accelerate protein folding. GroES binds to the apical surface of the GroEL ring, thereby capping the opening of the GroEL channel. This chain is Co-chaperonin GroES, found in Vesicomyosocius okutanii subsp. Calyptogena okutanii (strain HA).